The primary structure comprises 192 residues: Large ribosomal subunit protein bL9 (192 aa).

The interval 173 to 192 (ALRPEDFFDPEADGLDENEA) is disordered. The segment covering 179 to 192 (FFDPEADGLDENEA) has biased composition (acidic residues).

This sequence belongs to the bacterial ribosomal protein bL9 family.

Binds to the 23S rRNA. The chain is Large ribosomal subunit protein bL9 from Rhizobium etli (strain ATCC 51251 / DSM 11541 / JCM 21823 / NBRC 15573 / CFN 42).